The chain runs to 212 residues: Uridine kinase (212 aa).

Residue Gly-13 to Ser-20 participates in ATP binding.

The protein belongs to the uridine kinase family.

It is found in the cytoplasm. The enzyme catalyses uridine + ATP = UMP + ADP + H(+). It catalyses the reaction cytidine + ATP = CMP + ADP + H(+). It functions in the pathway pyrimidine metabolism; CTP biosynthesis via salvage pathway; CTP from cytidine: step 1/3. The protein operates within pyrimidine metabolism; UMP biosynthesis via salvage pathway; UMP from uridine: step 1/1. The chain is Uridine kinase from Shewanella piezotolerans (strain WP3 / JCM 13877).